A 563-amino-acid polypeptide reads, in one-letter code: MTKQQTSVMRNASIAKEEREGSDNNNVDRSSSDAISDNDAERSNSHSEIDNESNFDMVPYSRFSHKQKMLLVVQCAFTGFFSTVAGSIYYPVLTIIERKFNITEELANVTIVVYFIFQGVAPSIMGGLADTFGRRPIVLWAILAYFCACIGLACAHNYAQILALRCLQAAGISPVIAINSGIMGDVTTKVERGGYVGLVAGFQVVGTAFGALIGAGLSSKWGWRAIFWFLAIGSGICLVFSTLLMPETKRTLVGNGSVTPRSFLNRSLILHVGSVKKTLHLDDPDPETLEPRTSVDFLAPLKILHIREIDILLSIAGLQFSTWTTHQTALTIVLSKKYNLSVAKIGLCFLPAGISTLTSIISAGRYLNWSYRTRKVKYNRWIKEQELQLMEKYKGDKNKVAELIHSNSHYAFNLVEARLHPAFVTLLLSSIGFTAFGWCISVKTPLAAVLCTSAFASLFSNCILTFSTTLIVDLFPSKASTATGCLNLFRCLLSAIFIAALTKMVEKMRYGGVFTFLSAITSSSSLLLFYLLKNGKQLSFDRIRANDKSAGRSVGKNSEKVST.

Residues 1–10 (MTKQQTSVMR) are compositionally biased toward polar residues. The disordered stretch occupies residues 1 to 50 (MTKQQTSVMRNASIAKEEREGSDNNNVDRSSSDAISDNDAERSNSHSEID). Over 1–75 (MTKQQTSVMR…KQKMLLVVQC (75 aa)) the chain is Cytoplasmic. A compositionally biased stretch (low complexity) spans 23 to 33 (DNNNVDRSSSD). Positions 39-49 (DAERSNSHSEI) are enriched in basic and acidic residues. Residues 76-96 (AFTGFFSTVAGSIYYPVLTII) traverse the membrane as a helical segment. At 97 to 108 (ERKFNITEELAN) the chain is on the extracellular side. The helical transmembrane segment at 109-129 (VTIVVYFIFQGVAPSIMGGLA) threads the bilayer. The Cytoplasmic segment spans residues 130–135 (DTFGRR). A helical membrane pass occupies residues 136 to 156 (PIVLWAILAYFCACIGLACAH). Over 157–165 (NYAQILALR) the chain is Extracellular. The helical transmembrane segment at 166–186 (CLQAAGISPVIAINSGIMGDV) threads the bilayer. The Cytoplasmic portion of the chain corresponds to 187 to 195 (TTKVERGGY). A helical membrane pass occupies residues 196–216 (VGLVAGFQVVGTAFGALIGAG). The Extracellular portion of the chain corresponds to 217-224 (LSSKWGWR). Residues 225-245 (AIFWFLAIGSGICLVFSTLLM) form a helical membrane-spanning segment. Residues 246–296 (PETKRTLVGNGSVTPRSFLNRSLILHVGSVKKTLHLDDPDPETLEPRTSVD) lie on the Cytoplasmic side of the membrane. A helical membrane pass occupies residues 297–317 (FLAPLKILHIREIDILLSIAG). Residues 318-341 (LQFSTWTTHQTALTIVLSKKYNLS) are Extracellular-facing. The chain crosses the membrane as a helical span at residues 342-362 (VAKIGLCFLPAGISTLTSIIS). Residues 363 to 421 (AGRYLNWSYRTRKVKYNRWIKEQELQLMEKYKGDKNKVAELIHSNSHYAFNLVEARLHP) are Cytoplasmic-facing. Residues 422–442 (AFVTLLLSSIGFTAFGWCISV) form a helical membrane-spanning segment. Residues 443 to 445 (KTP) lie on the Extracellular side of the membrane. A helical membrane pass occupies residues 446–466 (LAAVLCTSAFASLFSNCILTF). The Cytoplasmic portion of the chain corresponds to 467-481 (STTLIVDLFPSKAST). The chain crosses the membrane as a helical span at residues 482 to 502 (ATGCLNLFRCLLSAIFIAALT). At 503 to 511 (KMVEKMRYG) the chain is on the extracellular side. The helical transmembrane segment at 512-532 (GVFTFLSAITSSSSLLLFYLL) threads the bilayer. Topologically, residues 533 to 563 (KNGKQLSFDRIRANDKSAGRSVGKNSEKVST) are cytoplasmic.

Belongs to the major facilitator superfamily. CAR1 family.

The protein resides in the cell membrane. Multidrug resistance transporter involved in resistance and adaptation to quinidine and ketoconazole. The protein is Quinidine resistance protein 1 (QDR1) of Saccharomyces cerevisiae (strain ATCC 204508 / S288c) (Baker's yeast).